Here is a 152-residue protein sequence, read N- to C-terminus: MHQVIQLKILDSRIGDTIPLPAYATDGSAGLDLRVCISEPMQVAPQQTVLLPTGIAIYIADPKLAAVILPRSGLGHKNGIVLGNLVGLIDSDYQGELKISCWNRSQEHFTVNPGDRIAQLVFIPVVQASFEVVNEFTESSRGEGGFGSSGRY.

Residues 71–73 (RSG), N84, 88–90 (LID), and K98 each bind substrate.

It belongs to the dUTPase family. Mg(2+) serves as cofactor.

The catalysed reaction is dUTP + H2O = dUMP + diphosphate + H(+). It participates in pyrimidine metabolism; dUMP biosynthesis; dUMP from dCTP (dUTP route): step 2/2. Functionally, this enzyme is involved in nucleotide metabolism: it produces dUMP, the immediate precursor of thymidine nucleotides and it decreases the intracellular concentration of dUTP so that uracil cannot be incorporated into DNA. The protein is Deoxyuridine 5'-triphosphate nucleotidohydrolase of Legionella pneumophila subsp. pneumophila (strain Philadelphia 1 / ATCC 33152 / DSM 7513).